The following is a 156-amino-acid chain: Small ribosomal subunit protein uS7 (156 aa).

The protein belongs to the universal ribosomal protein uS7 family. In terms of assembly, part of the 30S ribosomal subunit. Contacts proteins S9 and S11.

One of the primary rRNA binding proteins, it binds directly to 16S rRNA where it nucleates assembly of the head domain of the 30S subunit. Is located at the subunit interface close to the decoding center, probably blocks exit of the E-site tRNA. The protein is Small ribosomal subunit protein uS7 of Trichormus variabilis (strain ATCC 29413 / PCC 7937) (Anabaena variabilis).